A 200-amino-acid polypeptide reads, in one-letter code: Interferon lambda-1 (200 aa).

The first 19 residues, 1–19 (MAAAWTVVLVTLVLGLAVA), serve as a signal peptide directing secretion. Asn-65 is a glycosylation site (N-linked (GlcNAc...) asparagine). A disulfide bridge connects residues Cys-68 and Cys-164.

The protein belongs to the lambda interferon family.

Its subcellular location is the secreted. In terms of biological role, cytokine with antiviral, antitumour and immunomodulatory activities. Plays a critical role in the antiviral host defense, predominantly in the epithelial tissues. Acts as a ligand for the heterodimeric class II cytokine receptor composed of IL10RB and IFNLR1, and receptor engagement leads to the activation of the JAK/STAT signaling pathway resulting in the expression of IFN-stimulated genes (ISG), which mediate the antiviral state. Has a restricted receptor distribution and therefore restricted targets: is primarily active in epithelial cells and this cell type-selective action is because of the epithelial cell-specific expression of its receptor IFNLR1. Exerts an immunomodulatory effect by up-regulating MHC class I antigen expression. The protein is Interferon lambda-1 (IFNL1) of Homo sapiens (Human).